Here is a 195-residue protein sequence, read N- to C-terminus: Probable GTP-binding protein EngB (195 aa).

The EngB-type G domain maps to 24–195; sequence ELPEIALAGR…EAWDAILEKL (172 aa). Residues 32–39, 59–63, 77–80, 144–147, and 176–178 contribute to the GTP site; these read GRSNVGKS, GKTQL, DVPG, TKAD, and FSS. Residues serine 39 and threonine 61 each contribute to the Mg(2+) site.

It belongs to the TRAFAC class TrmE-Era-EngA-EngB-Septin-like GTPase superfamily. EngB GTPase family. Requires Mg(2+) as cofactor.

Functionally, necessary for normal cell division and for the maintenance of normal septation. This chain is Probable GTP-binding protein EngB, found in Streptococcus pneumoniae (strain P1031).